A 492-amino-acid chain; its full sequence is Trk system potassium uptake protein TrkI (492 aa).

10 consecutive transmembrane segments (helical) span residues 20–40 (VLAV…LVLI), 47–67 (ALAF…SWIV), 81–101 (FVLT…PLVL), 143–163 (IMQW…LPFL), 196–216 (IYCG…MSPL), 246–266 (QLLW…VLYI), 282–302 (VQGL…WRVS), 334–354 (AWGA…GCSG), 403–423 (VVAF…GLSL), and 465–485 (WLLC…LVLL).

It belongs to the TrkH potassium transport family.

The protein localises to the cell inner membrane. Medium-affinity potassium transport system. Probably interacts with Trk system potassium uptake protein TrkA. Main K(+) transporter in osmotically adapted cells. This chain is Trk system potassium uptake protein TrkI (trkI), found in Halomonas elongata (strain ATCC 33173 / DSM 2581 / NBRC 15536 / NCIMB 2198 / 1H9).